The following is a 214-amino-acid chain: MKFFLDTANVEAIRAINELGVVDGVTTNPSIISREGRDFETVIKEICEIVDGPISAEVTGLTAEEMIAEARSIAKWHDNVVVKIPMTTEGLKATNVLSQEGIKTNVTLIFTVSQGLMAMKAGATYISPFIGRLEDIGADPYQLISDLRGIIDLYGFQAEIIAASIRTAAHVEAVAQLGAHIATIPDPLFAKMTEHPLTTNGLKTFMEDWASFKK.

The Schiff-base intermediate with substrate role is filled by lysine 83.

Belongs to the transaldolase family. Type 3B subfamily.

The protein resides in the cytoplasm. It catalyses the reaction D-sedoheptulose 7-phosphate + D-glyceraldehyde 3-phosphate = D-erythrose 4-phosphate + beta-D-fructose 6-phosphate. It functions in the pathway carbohydrate degradation; pentose phosphate pathway; D-glyceraldehyde 3-phosphate and beta-D-fructose 6-phosphate from D-ribose 5-phosphate and D-xylulose 5-phosphate (non-oxidative stage): step 2/3. In terms of biological role, transaldolase is important for the balance of metabolites in the pentose-phosphate pathway. This chain is Probable transaldolase, found in Streptococcus equi subsp. zooepidemicus (strain MGCS10565).